A 159-amino-acid polypeptide reads, in one-letter code: Large ribosomal subunit protein uL11 (159 aa).

It belongs to the universal ribosomal protein uL11 family. Part of the ribosomal stalk of the 50S ribosomal subunit. Interacts with L10 and the large rRNA to form the base of the stalk. L10 forms an elongated spine to which L12 dimers bind in a sequential fashion forming a multimeric L10(L12)X complex.

Its function is as follows. Forms part of the ribosomal stalk which helps the ribosome interact with GTP-bound translation factors. The sequence is that of Large ribosomal subunit protein uL11 from Methanococcus maripaludis (strain C5 / ATCC BAA-1333).